The chain runs to 100 residues: NAD(P)H-quinone oxidoreductase subunit 4L, chloroplastic (100 aa).

3 helical membrane passes run 1–21, 31–51, and 60–80; these read MLEH…YGLI, MCLE…SDFF, and IFSI…PAIL.

Belongs to the complex I subunit 4L family. In terms of assembly, NDH is composed of at least 16 different subunits, 5 of which are encoded in the nucleus.

The protein localises to the plastid. The protein resides in the chloroplast thylakoid membrane. The enzyme catalyses a plastoquinone + NADH + (n+1) H(+)(in) = a plastoquinol + NAD(+) + n H(+)(out). It catalyses the reaction a plastoquinone + NADPH + (n+1) H(+)(in) = a plastoquinol + NADP(+) + n H(+)(out). Its function is as follows. NDH shuttles electrons from NAD(P)H:plastoquinone, via FMN and iron-sulfur (Fe-S) centers, to quinones in the photosynthetic chain and possibly in a chloroplast respiratory chain. The immediate electron acceptor for the enzyme in this species is believed to be plastoquinone. Couples the redox reaction to proton translocation, and thus conserves the redox energy in a proton gradient. This Cucumis sativus (Cucumber) protein is NAD(P)H-quinone oxidoreductase subunit 4L, chloroplastic.